Reading from the N-terminus, the 182-residue chain is Carbonic anhydrase (182 aa).

Positions 64, 81, and 86 each coordinate Mg(2+).

Belongs to the gamma-class carbonic anhydrase family. As to quaternary structure, homotrimer. The cofactor is Mg(2+). It depends on Zn(2+) as a cofactor.

The catalysed reaction is hydrogencarbonate + H(+) = CO2 + H2O. Reversible hydration of carbon dioxide. In Geobacillus kaustophilus (strain HTA426), this protein is Carbonic anhydrase.